An 85-amino-acid chain; its full sequence is Translation initiation factor IF-1 2 (85 aa).

The region spanning 1 to 72 (MAKEELIEMH…SKGRITFRHI (72 aa)) is the S1-like domain.

It belongs to the IF-1 family. As to quaternary structure, component of the 30S ribosomal translation pre-initiation complex which assembles on the 30S ribosome in the order IF-2 and IF-3, IF-1 and N-formylmethionyl-tRNA(fMet); mRNA recruitment can occur at any time during PIC assembly.

Its subcellular location is the cytoplasm. In terms of biological role, one of the essential components for the initiation of protein synthesis. Stabilizes the binding of IF-2 and IF-3 on the 30S subunit to which N-formylmethionyl-tRNA(fMet) subsequently binds. Helps modulate mRNA selection, yielding the 30S pre-initiation complex (PIC). Upon addition of the 50S ribosomal subunit IF-1, IF-2 and IF-3 are released leaving the mature 70S translation initiation complex. The polypeptide is Translation initiation factor IF-1 2 (Polaromonas sp. (strain JS666 / ATCC BAA-500)).